The primary structure comprises 974 residues: Phosphoenolpyruvate carboxylase 1 (974 aa).

Catalysis depends on residues His164 and Lys604.

This sequence belongs to the PEPCase type 1 family. As to quaternary structure, exists as a homotetramer or heterooligomer. Requires Mg(2+) as cofactor.

Its subcellular location is the cytoplasm. It catalyses the reaction oxaloacetate + phosphate = phosphoenolpyruvate + hydrogencarbonate. With respect to regulation, activated by glutamine and dihydroxyacetone phosphate. Inhibited by glutamate, aspartate, 2-oxoglutarate and malate. Functionally, through the carboxylation of phosphoenolpyruvate (PEP) it forms oxaloacetate, a four-carbon dicarboxylic acid source for the tricarboxylic acid cycle. The polypeptide is Phosphoenolpyruvate carboxylase 1 (Chlamydomonas reinhardtii (Chlamydomonas smithii)).